Reading from the N-terminus, the 367-residue chain is Flagellin 2 (367 aa).

This sequence belongs to the bacterial flagellin family.

It is found in the secreted. The protein localises to the bacterial flagellum. Its function is as follows. Flagellin is the subunit protein which polymerizes to form the filaments of bacterial flagella. This Proteus mirabilis protein is Flagellin 2 (fliC2).